A 95-amino-acid chain; its full sequence is Translation initiation factor 1A (95 aa).

Residues 7-81 enclose the S1-like domain; the sequence is GRKNLRMPED…DKADVTWRYE (75 aa).

It belongs to the eIF-1A family.

Its function is as follows. Seems to be required for maximal rate of protein biosynthesis. Enhances ribosome dissociation into subunits and stabilizes the binding of the initiator Met-tRNA(I) to 40 S ribosomal subunits. The sequence is that of Translation initiation factor 1A (eIF1A) from Halobacterium salinarum (strain ATCC 29341 / DSM 671 / R1).